Here is a 343-residue protein sequence, read N- to C-terminus: ATPase GET3 (343 aa).

An ATP-binding site is contributed by 32–39 (KGGVGKTT). Asp-61 is a catalytic residue. 2 residues coordinate ATP: Glu-245 and Asn-272. Cys-283 and Cys-286 together coordinate Zn(2+).

Belongs to the arsA ATPase family. As to quaternary structure, homodimer.

The protein resides in the cytoplasm. It is found in the endoplasmic reticulum. In terms of biological role, ATPase required for the post-translational delivery of tail-anchored (TA) proteins to the endoplasmic reticulum. Recognizes and selectively binds the transmembrane domain of TA proteins in the cytosol. This complex then targets to the endoplasmic reticulum by membrane-bound receptors, where the tail-anchored protein is released for insertion. This process is regulated by ATP binding and hydrolysis. ATP binding drives the homodimer towards the closed dimer state, facilitating recognition of newly synthesized TA membrane proteins. ATP hydrolysis is required for insertion. Subsequently, the homodimer reverts towards the open dimer state, lowering its affinity for the membrane-bound receptor, and returning it to the cytosol to initiate a new round of targeting. The polypeptide is ATPase GET3 (Pyricularia oryzae (strain 70-15 / ATCC MYA-4617 / FGSC 8958) (Rice blast fungus)).